The sequence spans 147 residues: Large ribosomal subunit protein bL9 (147 aa).

It belongs to the bacterial ribosomal protein bL9 family.

Functionally, binds to the 23S rRNA. This chain is Large ribosomal subunit protein bL9, found in Geotalea uraniireducens (strain Rf4) (Geobacter uraniireducens).